The sequence spans 133 residues: Salivary cystatin-L (133 aa).

The N-terminal stretch at 1–19 (MTASFALVLLLGGVAVCIA) is a signal peptide. The Cystatin domain occupies 29 to 115 (KANHQANPEY…VAQRTCTTVV (87 aa)).

The protein belongs to the cystatin family. Salivary gland.

It is found in the secreted. Inhibitor of cysteine proteinases. Inhibits host cathepsin L (CTSL) and S (CTSS). Modulates production of various cytokines and chemokines in lipopolysaccharide (LPS)-stimulated mouse dendritic cell. Suppresses maturation of mouse bone-marrow-derived dendritic cells (BMDCs). The protein is Salivary cystatin-L of Ixodes persulcatus (Taiga tick).